The primary structure comprises 124 residues: Fluoride-specific ion channel FluC (124 aa).

4 helical membrane passes run 4–24 (LLLVALGGSIGAVFRYLISIF), 35–55 (FGTLLVNVLGSFLMGVIYALG), 60–80 (ISPEFKALIGVGLLGALTTFS), and 102–122 (VVLNLSLCLFMVYLGQQLVFS). 2 residues coordinate Na(+): Gly-74 and Thr-77.

It belongs to the fluoride channel Fluc/FEX (TC 1.A.43) family.

The protein resides in the cell inner membrane. The enzyme catalyses fluoride(in) = fluoride(out). Na(+) is not transported, but it plays an essential structural role and its presence is essential for fluoride channel function. Functionally, fluoride-specific ion channel. Important for reducing fluoride concentration in the cell, thus reducing its toxicity. The sequence is that of Fluoride-specific ion channel FluC from Shewanella oneidensis (strain ATCC 700550 / JCM 31522 / CIP 106686 / LMG 19005 / NCIMB 14063 / MR-1).